Reading from the N-terminus, the 235-residue chain is Phosphoribosylaminoimidazole-succinocarboxamide synthase (235 aa).

This sequence belongs to the SAICAR synthetase family.

It carries out the reaction 5-amino-1-(5-phospho-D-ribosyl)imidazole-4-carboxylate + L-aspartate + ATP = (2S)-2-[5-amino-1-(5-phospho-beta-D-ribosyl)imidazole-4-carboxamido]succinate + ADP + phosphate + 2 H(+). Its pathway is purine metabolism; IMP biosynthesis via de novo pathway; 5-amino-1-(5-phospho-D-ribosyl)imidazole-4-carboxamide from 5-amino-1-(5-phospho-D-ribosyl)imidazole-4-carboxylate: step 1/2. The sequence is that of Phosphoribosylaminoimidazole-succinocarboxamide synthase from Chlorobaculum parvum (strain DSM 263 / NCIMB 8327) (Chlorobium vibrioforme subsp. thiosulfatophilum).